Here is a 248-residue protein sequence, read N- to C-terminus: Pyridoxine 5'-phosphate synthase (248 aa).

Asparagine 12 contributes to the 3-amino-2-oxopropyl phosphate binding site. A 1-deoxy-D-xylulose 5-phosphate-binding site is contributed by 14–15 (DH). Arginine 23 serves as a coordination point for 3-amino-2-oxopropyl phosphate. The active-site Proton acceptor is histidine 48. The 1-deoxy-D-xylulose 5-phosphate site is built by arginine 50 and histidine 55. Glutamate 75 serves as the catalytic Proton acceptor. Position 105 (threonine 105) interacts with 1-deoxy-D-xylulose 5-phosphate. Histidine 196 functions as the Proton donor in the catalytic mechanism. 3-amino-2-oxopropyl phosphate is bound by residues glycine 197 and 218 to 219 (GH).

It belongs to the PNP synthase family. Homooctamer; tetramer of dimers.

It is found in the cytoplasm. The enzyme catalyses 3-amino-2-oxopropyl phosphate + 1-deoxy-D-xylulose 5-phosphate = pyridoxine 5'-phosphate + phosphate + 2 H2O + H(+). It functions in the pathway cofactor biosynthesis; pyridoxine 5'-phosphate biosynthesis; pyridoxine 5'-phosphate from D-erythrose 4-phosphate: step 5/5. Catalyzes the complicated ring closure reaction between the two acyclic compounds 1-deoxy-D-xylulose-5-phosphate (DXP) and 3-amino-2-oxopropyl phosphate (1-amino-acetone-3-phosphate or AAP) to form pyridoxine 5'-phosphate (PNP) and inorganic phosphate. This chain is Pyridoxine 5'-phosphate synthase, found in Stutzerimonas stutzeri (strain A1501) (Pseudomonas stutzeri).